A 408-amino-acid polypeptide reads, in one-letter code: Imidazolonepropionase (408 aa).

Residues His-73 and His-75 each contribute to the Fe(3+) site. Positions 73 and 75 each coordinate Zn(2+). 4-imidazolone-5-propanoate is bound by residues Arg-82, Tyr-145, and His-178. Tyr-145 contributes to the N-formimidoyl-L-glutamate binding site. His-243 lines the Fe(3+) pocket. His-243 is a Zn(2+) binding site. 4-imidazolone-5-propanoate is bound at residue Gln-246. A Fe(3+)-binding site is contributed by Asp-318. Asp-318 contacts Zn(2+). Residues Asn-320 and Gly-322 each contribute to the N-formimidoyl-L-glutamate site. A 4-imidazolone-5-propanoate-binding site is contributed by Ser-323.

This sequence belongs to the metallo-dependent hydrolases superfamily. HutI family. Requires Zn(2+) as cofactor. Fe(3+) is required as a cofactor.

It localises to the cytoplasm. It carries out the reaction 4-imidazolone-5-propanoate + H2O = N-formimidoyl-L-glutamate. Its pathway is amino-acid degradation; L-histidine degradation into L-glutamate; N-formimidoyl-L-glutamate from L-histidine: step 3/3. Its function is as follows. Catalyzes the hydrolytic cleavage of the carbon-nitrogen bond in imidazolone-5-propanoate to yield N-formimidoyl-L-glutamate. It is the third step in the universal histidine degradation pathway. The protein is Imidazolonepropionase of Shewanella halifaxensis (strain HAW-EB4).